Consider the following 160-residue polypeptide: Ribosomal RNA large subunit methyltransferase H (160 aa).

Residues leucine 77, glycine 109, and 128–133 (FSRLTF) contribute to the S-adenosyl-L-methionine site.

Belongs to the RNA methyltransferase RlmH family. As to quaternary structure, homodimer.

The protein resides in the cytoplasm. It catalyses the reaction pseudouridine(1915) in 23S rRNA + S-adenosyl-L-methionine = N(3)-methylpseudouridine(1915) in 23S rRNA + S-adenosyl-L-homocysteine + H(+). Functionally, specifically methylates the pseudouridine at position 1915 (m3Psi1915) in 23S rRNA. The polypeptide is Ribosomal RNA large subunit methyltransferase H (Desulfitobacterium hafniense (strain DSM 10664 / DCB-2)).